The sequence spans 373 residues: Septin homolog spn3 (373 aa).

One can recognise a Septin-type G domain in the interval 10–286 (KGIPLNLMVV…ETYRTEKLST (277 aa)). The segment at 20–27 (GDVGLGRT) is G1 motif. Residue 20–27 (GDVGLGRT) participates in GTP binding. Positions 79–82 (DTPH) are G3 motif. The interval 161–164 (AKAD) is G4 motif. GTP contacts are provided by residues 162–170 (KADSLTAQE) and Arg235. Phosphoserine is present on Ser303. Residues 311–357 (EDRLRAIELSVQKEIEEKRRQLLAREEALRALEEKLAASTAAMANAS) are a coiled coil.

It belongs to the TRAFAC class TrmE-Era-EngA-EngB-Septin-like GTPase superfamily. Septin GTPase family. As to quaternary structure, component of the septin complex composed of two copies of each spn1, spn2, spn3 and spn4.

It localises to the cytoplasm. The protein localises to the cell cortex. Its function is as follows. Plays a role in the cell cycle. Involved in a late stage of septum formation leading to the separation of the daughter cells. This chain is Septin homolog spn3 (spn3), found in Schizosaccharomyces pombe (strain 972 / ATCC 24843) (Fission yeast).